Reading from the N-terminus, the 50-residue chain is Protein PndA (50 aa).

Residues 5-25 form a helical membrane-spanning segment; that stretch reads TFLMMLIVVCVTILCFVWMVR.

This sequence belongs to the Hok/Gef family.

The protein localises to the cell inner membrane. When overexpressed kill the cells from the inside by interfering with a vital function in the cell membrane. Functionally, toxic component of a type I toxin-antitoxin (TA) system. When expressed is involved in cellular Mg(2+) release and degradation of stable RNA. In Escherichia coli, this protein is Protein PndA (pndA).